Consider the following 119-residue polypeptide: uncharacterized protein (119 aa).

The stretch at 63 to 104 forms a coiled coil; the sequence is KKIKKELESNSEKRKAALQMIKEEHTAKVDRYKMIIEDLRQQ.

This is an uncharacterized protein from Bacillus subtilis (strain 168).